The following is a 399-amino-acid chain: Trimethyllysine dioxygenase (399 aa).

Residues histidine 214, aspartate 216, and histidine 360 each coordinate Fe cation.

It belongs to the gamma-BBH/TMLD family. Fe(2+) is required as a cofactor. It depends on L-ascorbate as a cofactor.

The protein localises to the cytoplasm. The catalysed reaction is N(6),N(6),N(6)-trimethyl-L-lysine + 2-oxoglutarate + O2 = (3S)-3-hydroxy-N(6),N(6),N(6)-trimethyl-L-lysine + succinate + CO2. The protein operates within amine and polyamine biosynthesis; carnitine biosynthesis. Converts trimethyllysine (TML) into hydroxytrimethyllysine (HTML). This Meyerozyma guilliermondii (strain ATCC 6260 / CBS 566 / DSM 6381 / JCM 1539 / NBRC 10279 / NRRL Y-324) (Yeast) protein is Trimethyllysine dioxygenase.